The sequence spans 30 residues: Trypsin inhibitor 1 (30 aa).

3 disulfide bridges follow: Cys4–Cys21, Cys11–Cys23, and Cys17–Cys29.

Belongs to the protease inhibitor I7 (squash-type serine protease inhibitor) family.

It localises to the secreted. Its function is as follows. Inhibits trypsin. The polypeptide is Trypsin inhibitor 1 (Momordica charantia (Bitter gourd)).